A 556-amino-acid polypeptide reads, in one-letter code: Interleukin-1 receptor-like 1 (556 aa).

The signal sequence occupies residues 1 to 18; the sequence is MGFWILAILTILMYSTAA. 2 Ig-like C2-type domains span residues 19–103 and 114–197; these read KFSK…ANVT and PDYL…VTAT. Residues 19–328 are Extracellular-facing; sequence KFSKQSWGLE…SRKNPIDHHS (310 aa). Cysteines 36 and 87 form a disulfide. N-linked (GlcNAc...) asparagine glycosylation is found at N54, N95, N101, N140, and N191. 2 cysteine pairs are disulfide-bonded: C111-C151 and C133-C181. The flexible linker stretch occupies residues 198–211; it reads RSFTVKDEQGFSLF. Residues 212 to 319 enclose the Ig-like C2-type 3 domain; that stretch reads PVIGAPAQNE…GLRRHTVRLS (108 aa). N-linked (GlcNAc...) asparagine glycosylation is found at N232, N254, and N273. Intrachain disulfides connect C235–C303 and C238–C282. K321 participates in a covalent cross-link: Glycyl lysine isopeptide (Lys-Gly) (interchain with G-Cter in ubiquitin). The helical transmembrane segment at 329-349 threads the bilayer; that stretch reads IYCIIAVCSVFLMLINVLVII. The Cytoplasmic portion of the chain corresponds to 350 to 556; that stretch reads LKMFWIEATL…SLTPLAAQKQ (207 aa). The TIR domain maps to 375–535; sequence KLYDAYVVYP…KFWKHVRYQM (161 aa). E461 is a catalytic residue.

Belongs to the interleukin-1 receptor family. In terms of assembly, interacts with MYD88, IRAK1, IRAK4, and TRAF6. Bound to its ligand IL-33, interacts with IL1RAP to form the minimal interleukin-33 signaling complex with a 1:1:1 stoichiometry. Interacts with KIT (bound to KITLG/SCF). A mast cell-specific KITLG/SCF-induced interleukin-33 signaling complex contains IL1RL1, IL1RAP, KIT and MYD88. Interacts with TMED1. Ubiquitinated at Lys-321 in a FBXL19-mediated manner; leading to proteasomal degradation. Ubiquitination by TRAF6 via 'Lys-27'-linked polyubiquitination and deubiquitination by USP38 serves as a critical regulatory mechanism for fine-tuning IL1RL1-mediated inflammatory response. Highly expressed in kidney, lung, placenta, stomach, skeletal muscle, colon and small intestine. Isoform A is prevalently expressed in the lung, testis, placenta, stomach and colon. Isoform B is more abundant in the brain, kidney and the liver. Isoform C is not detected in brain, heart, liver, kidney and skeletal muscle. Expressed on T-cells in fibrotic liver; at protein level. Overexpressed in fibrotic and cirrhotic liver.

It is found in the cell membrane. The protein localises to the secreted. It catalyses the reaction NAD(+) + H2O = ADP-D-ribose + nicotinamide + H(+). Receptor for interleukin-33 (IL-33) which plays crucial roles in innate and adaptive immunity, contributing to tissue homeostasis and responses to environmental stresses together with coreceptor IL1RAP. Its stimulation recruits MYD88, IRAK1, IRAK4, and TRAF6, followed by phosphorylation of MAPK3/ERK1 and/or MAPK1/ERK2, MAPK14, and MAPK8. Possibly involved in helper T-cell function. Upon tissue injury, induces UCP2-dependent mitochondrial rewiring that attenuates the generation of reactive oxygen species and preserves the integrity of Krebs cycle required for persistent production of itaconate and subsequent GATA3-dependent differentiation of inflammation-resolving alternatively activated macrophages. Its function is as follows. Inhibits IL-33 signaling. This chain is Interleukin-1 receptor-like 1 (IL1RL1), found in Homo sapiens (Human).